Reading from the N-terminus, the 293-residue chain is D-psicose 3-epimerase (293 aa).

Positions 6 and 107 each coordinate substrate. Glutamate 150 serves as the catalytic Proton donor/acceptor. Position 150 (glutamate 150) interacts with Mn(2+). Residues glutamate 156 and aspartate 183–histidine 186 contribute to the substrate site. Mn(2+) contacts are provided by aspartate 183 and histidine 209. Substrate is bound at residue arginine 215. Residue glutamate 244 is the Proton donor/acceptor of the active site. Glutamate 244 provides a ligand contact to Mn(2+).

It belongs to the hyi family. In terms of assembly, homotetramer. Mn(2+) serves as cofactor. Co(2+) is required as a cofactor.

The enzyme catalyses D-allulose = keto-D-fructose. Involved in the biosynthesis of D-psicose. Catalyzes the reversible epimerization of D-fructose at the C3 position to yield D-psicose. The enzyme is highly specific for D-psicose and shows very low activity with D-tagatose. This is D-psicose 3-epimerase from Ruminiclostridium cellulolyticum (strain ATCC 35319 / DSM 5812 / JCM 6584 / H10) (Clostridium cellulolyticum).